A 388-amino-acid polypeptide reads, in one-letter code: Succinate--CoA ligase [ADP-forming] subunit beta (388 aa).

The region spanning 9 to 244 is the ATP-grasp domain; that stretch reads KQIFAKYKLP…PSQDDPREAL (236 aa). ATP-binding positions include lysine 46, 53 to 55, glutamate 99, alanine 102, and glutamate 107; that span reads GRG. Mg(2+) contacts are provided by asparagine 199 and aspartate 213. Residues asparagine 264 and 321–323 contribute to the substrate site; that span reads GIV.

It belongs to the succinate/malate CoA ligase beta subunit family. In terms of assembly, heterotetramer of two alpha and two beta subunits. Requires Mg(2+) as cofactor.

The enzyme catalyses succinate + ATP + CoA = succinyl-CoA + ADP + phosphate. It catalyses the reaction GTP + succinate + CoA = succinyl-CoA + GDP + phosphate. It functions in the pathway carbohydrate metabolism; tricarboxylic acid cycle; succinate from succinyl-CoA (ligase route): step 1/1. In terms of biological role, succinyl-CoA synthetase functions in the citric acid cycle (TCA), coupling the hydrolysis of succinyl-CoA to the synthesis of either ATP or GTP and thus represents the only step of substrate-level phosphorylation in the TCA. The beta subunit provides nucleotide specificity of the enzyme and binds the substrate succinate, while the binding sites for coenzyme A and phosphate are found in the alpha subunit. The sequence is that of Succinate--CoA ligase [ADP-forming] subunit beta from Glaesserella parasuis serovar 5 (strain SH0165) (Haemophilus parasuis).